We begin with the raw amino-acid sequence, 394 residues long: 12-oxophytodienoate reductase 7 (394 aa).

Residues P35–T37 and Q110 each bind FMN. Residue H189–H192 coordinates substrate. Residue Y194 is the Proton donor of the active site. R241 is an FMN binding site. A substrate-binding site is contributed by R286. Residues G324 and G345–R346 each bind FMN. The short motif at S392–M394 is the Microbody targeting signal element.

The protein belongs to the NADH:flavin oxidoreductase/NADH oxidase family. FMN serves as cofactor.

It is found in the peroxisome. It catalyses the reaction (1S,2S)-OPC-8 + NADP(+) = (9S,13S,15Z)-12-oxophyto-10,15-dienoate + NADPH + H(+). It participates in lipid metabolism; oxylipin biosynthesis. Involved in the biosynthesis of jasmonate (JA) and perhaps in biosynthesis or metabolism of other oxylipin signaling moleclules. In vitro, reduces cis(+)-12-oxophytodienoic acid (cis(+)-OPDA) and cis(-)-OPDA to cis(+)-OPC-8:0 and cis(-)-OPC-8:0, respectively. May be required for the spatial and temporal regulation of JA levels during dehiscence of anthers, promoting the stomium degeneration program. Involved in carbohydrate transport underlying normal lodicule function during anthesis. This chain is 12-oxophytodienoate reductase 7, found in Oryza sativa subsp. japonica (Rice).